The sequence spans 179 residues: Large ribosomal subunit protein uL5 (179 aa).

It belongs to the universal ribosomal protein uL5 family. As to quaternary structure, part of the 50S ribosomal subunit; part of the 5S rRNA/L5/L18/L25 subcomplex. Contacts the 5S rRNA and the P site tRNA. Forms a bridge to the 30S subunit in the 70S ribosome.

In terms of biological role, this is one of the proteins that bind and probably mediate the attachment of the 5S RNA into the large ribosomal subunit, where it forms part of the central protuberance. In the 70S ribosome it contacts protein S13 of the 30S subunit (bridge B1b), connecting the 2 subunits; this bridge is implicated in subunit movement. Contacts the P site tRNA; the 5S rRNA and some of its associated proteins might help stabilize positioning of ribosome-bound tRNAs. This Bordetella avium (strain 197N) protein is Large ribosomal subunit protein uL5.